The primary structure comprises 581 residues: Arginine--tRNA ligase (581 aa).

Positions 126–136 (PNLAKEMHVGH) match the 'HIGH' region motif.

The protein belongs to the class-I aminoacyl-tRNA synthetase family. As to quaternary structure, monomer.

The protein resides in the cytoplasm. It carries out the reaction tRNA(Arg) + L-arginine + ATP = L-arginyl-tRNA(Arg) + AMP + diphosphate. This chain is Arginine--tRNA ligase, found in Shewanella sp. (strain ANA-3).